Reading from the N-terminus, the 630-residue chain is Phosphomethylpyrimidine synthase (630 aa).

Residues Asn227, Met256, Tyr285, His321, 341–343, 382–385, and Glu421 contribute to the substrate site; these read SRG and DGLR. His425 lines the Zn(2+) pocket. Tyr448 provides a ligand contact to substrate. His489 lines the Zn(2+) pocket. Residues Cys569, Cys572, and Cys577 each contribute to the [4Fe-4S] cluster site.

Belongs to the ThiC family. Homodimer. [4Fe-4S] cluster serves as cofactor.

The enzyme catalyses 5-amino-1-(5-phospho-beta-D-ribosyl)imidazole + S-adenosyl-L-methionine = 4-amino-2-methyl-5-(phosphooxymethyl)pyrimidine + CO + 5'-deoxyadenosine + formate + L-methionine + 3 H(+). It functions in the pathway cofactor biosynthesis; thiamine diphosphate biosynthesis. In terms of biological role, catalyzes the synthesis of the hydroxymethylpyrimidine phosphate (HMP-P) moiety of thiamine from aminoimidazole ribotide (AIR) in a radical S-adenosyl-L-methionine (SAM)-dependent reaction. The sequence is that of Phosphomethylpyrimidine synthase from Hydrogenovibrio crunogenus (strain DSM 25203 / XCL-2) (Thiomicrospira crunogena).